The chain runs to 373 residues: Putative F-box/kelch-repeat protein At2g41360 (373 aa).

Positions Trp-8 to Arg-54 constitute an F-box domain. 2 Kelch repeats span residues Glu-116–Gly-162 and Lys-163–Ser-208.

This Arabidopsis thaliana (Mouse-ear cress) protein is Putative F-box/kelch-repeat protein At2g41360.